A 143-amino-acid polypeptide reads, in one-letter code: uncharacterized protein (143 aa).

A disordered region spans residues M1–A37.

It belongs to the dynein light chain Tctex-type family.

This is an uncharacterized protein from Mycosarcoma maydis (Corn smut fungus).